Reading from the N-terminus, the 427-residue chain is Serine hydroxymethyltransferase (427 aa).

120–122 serves as a coordination point for (6S)-5,6,7,8-tetrahydrofolate; the sequence is GHI. Lysine 226 carries the N6-(pyridoxal phosphate)lysine modification.

This sequence belongs to the SHMT family. In terms of assembly, homodimer. Pyridoxal 5'-phosphate is required as a cofactor.

It localises to the cytoplasm. It participates in amino-acid biosynthesis; glycine biosynthesis; glycine from L-serine: step 1/1. In terms of biological role, catalyzes the reversible interconversion of serine and glycine with a modified folate serving as the one-carbon carrier. Also exhibits a pteridine-independent aldolase activity toward beta-hydroxyamino acids, producing glycine and aldehydes, via a retro-aldol mechanism. The chain is Serine hydroxymethyltransferase from Pyrococcus furiosus (strain ATCC 43587 / DSM 3638 / JCM 8422 / Vc1).